The sequence spans 280 residues: Cell envelope integrity protein EipB (280 aa).

Residues 1–24 form the signal peptide; it reads MRFVRIAAAASGATVFMWAGFAGA. C69 and C278 are joined by a disulfide.

In terms of assembly, monomer.

It is found in the periplasm. Functionally, functions in the periplasm to maintain cell envelope integrity. The protein is Cell envelope integrity protein EipB of Brucella abortus (strain 2308).